The chain runs to 492 residues: ATP synthase subunit beta, plastid (492 aa).

An ATP-binding site is contributed by 170–177 (GGAGVGKT).

The protein belongs to the ATPase alpha/beta chains family. In terms of assembly, F-type ATPases have 2 components, CF(1) - the catalytic core - and CF(0) - the membrane proton channel. CF(1) has five subunits: alpha(3), beta(3), gamma(1), delta(1), epsilon(1). CF(0) has four main subunits: a(1), b(1), b'(1) and c(9-12).

The protein localises to the plastid membrane. The catalysed reaction is ATP + H2O + 4 H(+)(in) = ADP + phosphate + 5 H(+)(out). In terms of biological role, produces ATP from ADP in the presence of a proton gradient across the membrane. The catalytic sites are hosted primarily by the beta subunits. The sequence is that of ATP synthase subunit beta, plastid from Aneura mirabilis (Parasitic liverwort).